A 167-amino-acid polypeptide reads, in one-letter code: Small ribosomal subunit protein uS5 (167 aa).

The 64-residue stretch at 12–75 folds into the S5 DRBM domain; sequence LEERVVTINR…EDAKKNMVLV (64 aa).

It belongs to the universal ribosomal protein uS5 family. Part of the 30S ribosomal subunit. Contacts proteins S4 and S8.

With S4 and S12 plays an important role in translational accuracy. In terms of biological role, located at the back of the 30S subunit body where it stabilizes the conformation of the head with respect to the body. In Listeria monocytogenes serotype 4b (strain F2365), this protein is Small ribosomal subunit protein uS5.